Reading from the N-terminus, the 108-residue chain is uncharacterized protein (108 aa).

This is an uncharacterized protein from Mycoplasma pneumoniae (strain ATCC 29342 / M129 / Subtype 1) (Mycoplasmoides pneumoniae).